Reading from the N-terminus, the 594-residue chain is Putative diflavin flavoprotein A 4 (594 aa).

The interval 57–250 (RRGTTSNSYL…LTLKMIAPGH (194 aa)) is zinc metallo-hydrolase. Residues 279–417 (VALIYASAYG…VCTTSGANFA (139 aa)) form the Flavodoxin-like domain. The tract at residues 445 to 594 (VGRIIGSIGV…IRHRKSGGQY (150 aa)) is flavodoxin-reductase-like.

This sequence in the N-terminal section; belongs to the zinc metallo-hydrolase group 3 family. The protein in the C-terminal section; belongs to the flavodoxin reductase family. Requires Fe cation as cofactor.

In terms of biological role, mediates electron transfer from NADH to oxygen, reducing it to water. This modular protein has 3 redox cofactors, in other organisms the same activity requires 2 or 3 proteins. The chain is Putative diflavin flavoprotein A 4 (dfa4) from Synechocystis sp. (strain ATCC 27184 / PCC 6803 / Kazusa).